Reading from the N-terminus, the 141-residue chain is ATP synthase epsilon chain 1 (141 aa).

Belongs to the ATPase epsilon chain family. As to quaternary structure, F-type ATPases have 2 components, CF(1) - the catalytic core - and CF(0) - the membrane proton channel. CF(1) has five subunits: alpha(3), beta(3), gamma(1), delta(1), epsilon(1). CF(0) has three main subunits: a, b and c.

It is found in the cell inner membrane. Functionally, produces ATP from ADP in the presence of a proton gradient across the membrane. The protein is ATP synthase epsilon chain 1 of Paraburkholderia xenovorans (strain LB400).